Consider the following 125-residue polypeptide: Succinate dehydrogenase assembly factor 3, mitochondrial (125 aa).

The N-terminal 30 residues, 1–30, are a transit peptide targeting the mitochondrion; that stretch reads MTGRHVSRVRSLYRRILQLHRALPPDLKAL.

The protein belongs to the complex I LYR family. SDHAF3 subfamily. As to quaternary structure, interacts with Sdhb within an Sdha-Sdhb subcomplex.

Its subcellular location is the mitochondrion matrix. Its function is as follows. Plays an essential role in the assembly of succinate dehydrogenase (SDH), an enzyme complex (also referred to as respiratory complex II) that is a component of both the tricarboxylic acid (TCA) cycle and the mitochondrial electron transport chain, and which couples the oxidation of succinate to fumarate with the reduction of ubiquinone (coenzyme Q) to ubiquinol. Promotes maturation of the iron-sulfur protein subunit Sdhb of the SDH catalytic dimer, protecting it from the deleterious effects of oxidants. May act together with SDHAF1. The chain is Succinate dehydrogenase assembly factor 3, mitochondrial from Rattus norvegicus (Rat).